Consider the following 154-residue polypeptide: 6,7-dimethyl-8-ribityllumazine synthase (154 aa).

Residues phenylalanine 22, 56–58 (AFE), and 80–82 (AVI) each bind 5-amino-6-(D-ribitylamino)uracil. 85 to 86 (AT) provides a ligand contact to (2S)-2-hydroxy-3-oxobutyl phosphate. The Proton donor role is filled by histidine 88. Phenylalanine 113 serves as a coordination point for 5-amino-6-(D-ribitylamino)uracil. (2S)-2-hydroxy-3-oxobutyl phosphate is bound at residue arginine 127.

This sequence belongs to the DMRL synthase family. Forms an icosahedral capsid composed of 60 subunits, arranged as a dodecamer of pentamers.

It carries out the reaction (2S)-2-hydroxy-3-oxobutyl phosphate + 5-amino-6-(D-ribitylamino)uracil = 6,7-dimethyl-8-(1-D-ribityl)lumazine + phosphate + 2 H2O + H(+). The protein operates within cofactor biosynthesis; riboflavin biosynthesis; riboflavin from 2-hydroxy-3-oxobutyl phosphate and 5-amino-6-(D-ribitylamino)uracil: step 1/2. Its function is as follows. Catalyzes the formation of 6,7-dimethyl-8-ribityllumazine by condensation of 5-amino-6-(D-ribitylamino)uracil with 3,4-dihydroxy-2-butanone 4-phosphate. This is the penultimate step in the biosynthesis of riboflavin. The chain is 6,7-dimethyl-8-ribityllumazine synthase from Anoxybacillus flavithermus (strain DSM 21510 / WK1).